The primary structure comprises 208 residues: Methylthioribulose-1-phosphate dehydratase (208 aa).

Positions 96 and 98 each coordinate Zn(2+).

Belongs to the aldolase class II family. MtnB subfamily. The cofactor is Zn(2+).

It carries out the reaction 5-(methylsulfanyl)-D-ribulose 1-phosphate = 5-methylsulfanyl-2,3-dioxopentyl phosphate + H2O. Its pathway is amino-acid biosynthesis; L-methionine biosynthesis via salvage pathway; L-methionine from S-methyl-5-thio-alpha-D-ribose 1-phosphate: step 2/6. Catalyzes the dehydration of methylthioribulose-1-phosphate (MTRu-1-P) into 2,3-diketo-5-methylthiopentyl-1-phosphate (DK-MTP-1-P). This is Methylthioribulose-1-phosphate dehydratase from Pseudomonas fluorescens (strain Pf0-1).